The following is a 44-amino-acid chain: Thymosin beta-10 (44 aa).

Basic and acidic residues-rich tracts occupy residues 1–25 (MADK…ETQE) and 33–44 (ETIEQEKRSEIS). Residues 1-44 (MADKPDMGEIASFDKAKLKKTETQEKNTLPTKETIEQEKRSEIS) are disordered. Ala2 bears the N-acetylalanine mark. Lys4 carries the post-translational modification N6-acetyllysine. Ser12 carries the post-translational modification Phosphoserine. Position 15 is an N6-acetyllysine (Lys15). Thr21, Thr23, and Thr34 each carry phosphothreonine. An N6-acetyllysine modification is found at Lys39. Ser41 bears the Phosphoserine mark.

This sequence belongs to the thymosin beta family.

The protein resides in the cytoplasm. The protein localises to the cytoskeleton. Its function is as follows. Plays an important role in the organization of the cytoskeleton. Binds to and sequesters actin monomers (G actin) and therefore inhibits actin polymerization. The sequence is that of Thymosin beta-10 (Tmsb10) from Rattus norvegicus (Rat).